The primary structure comprises 1663 residues: Cortactin-binding protein 2 (1663 aa).

Disordered stretches follow at residues 1-23 (MATDGASCEPDLSRAPEDAAGAA), 203-222 (KKKTNELEEELSAEKRRSTE), 367-440 (GASV…LHPG), 454-478 (GNANDPDQNGNTTQSPPSRDVSPTS), and 498-614 (RFTS…LPPK). The stretch at 119-276 (KKMQERMSAQ…EQLKKGSDSK (158 aa)) forms a coiled coil. The segment covering 386–396 (PSTGSTSDPTS) has biased composition (low complexity). An Asymmetric dimethylarginine modification is found at Arg498. Over residues 583–593 (TVASTPSSLPQ) the composition is skewed to polar residues. ANK repeat units follow at residues 709–739 (GRPTLLQQAAAQGNVTLLSMLLNEEGLDINY), 743–772 (DGHSALYSAAKNGHTDCVRLLLSAEAQVNA), 776–805 (NGFTPLCAAAAQGHFECVELLISYDANINH), 809–838 (GGQTPLYLACKNGNKECIKLLLEAGTNRSV), 842–871 (DGWTPVHAAVDTGNVDSLKLLMYHRIPAHG), and 912–942 (EGWTAAHIAASKGFKNCLEILCRHGGLEPER). Residues 1448-1483 (KKGESGAWRKVNTSPRRKSGRFSLPTWNKPDLSTEG) form a disordered region. Residue Ser1524 is modified to Phosphoserine. Residues 1560–1663 (DSSGNNPVLS…KNGHLEKPNK (104 aa)) form a disordered region. 2 stretches are compositionally biased toward polar residues: residues 1561–1574 (SSGNNPVLSATINN) and 1582–1599 (KEVSPLSSHQTTECSNSK). Residues 1624 to 1638 (SQNTKRSSSSSNTRQ) are compositionally biased toward low complexity. Basic and acidic residues predominate over residues 1645 to 1663 (SKEENWNLHKNGHLEKPNK).

In terms of assembly, interacts with CTTN/cortactin SH3 domain. Interacts with STRN, STRN4/zinedin and MOB4/phocein; this interactions mediate the association with the STRIPAK core complex and may regulate dendritic spine distribution of the STRIPAK complex in hippocampal neurons. Activation of glutamate receptors weakens the interaction with STRN and STRN4.

The protein resides in the cytoplasm. The protein localises to the cell cortex. Its subcellular location is the cell projection. It localises to the dendritic spine. Its function is as follows. Regulates the dendritic spine distribution of CTTN/cortactin in hippocampal neurons, and thus controls dendritic spinogenesis and dendritic spine maintenance. Associates with the striatin-interacting phosphatase and kinase (STRIPAK) core complex to regulate dendritic spine distribution of the STRIPAK complex in hippocampal neurons. This Gorilla gorilla gorilla (Western lowland gorilla) protein is Cortactin-binding protein 2 (CTTNBP2).